The sequence spans 478 residues: Serine/threonine-protein phosphatase T (478 aa).

TPR repeat units follow at residues 9-42, 43-76, and 78-110; these read ATAL…YDRE, PSFF…DPAY, and KAYW…EPNN. Positions 151–463 are catalytic; the sequence is AVDDSYDGVR…QVFEAVPHPD (313 aa). Mn(2+) is bound by residues aspartate 221, histidine 223, aspartate 250, and asparagine 282. The Proton donor/acceptor role is filled by histidine 283. The Mn(2+) site is built by histidine 331 and histidine 408.

It belongs to the PPP phosphatase family. PP-5 (PP-T) subfamily. Mg(2+) is required as a cofactor. Mn(2+) serves as cofactor.

It localises to the nucleus. It carries out the reaction O-phospho-L-seryl-[protein] + H2O = L-seryl-[protein] + phosphate. The enzyme catalyses O-phospho-L-threonyl-[protein] + H2O = L-threonyl-[protein] + phosphate. Protein phosphatase that specifically binds to and dephosphorylates the molecular chaperone Hsp90. Dephosphorylation positively regulates the Hsp90 chaperone machinery. The sequence is that of Serine/threonine-protein phosphatase T from Aspergillus oryzae (strain ATCC 42149 / RIB 40) (Yellow koji mold).